The primary structure comprises 600 residues: MAQAWAFLLPVLFFGSYVTNLFLPTYASSPLCSGDGGRSFLCAQAPKDKDPSPASTMYKTAFHFQSAKNWMNDPSGPMYFNGIYHEFYQYNLNGPIFGDIVWGHSVSTDLINWIGLGPALVRDTSSDIDGCWTGSVTILPGGKPVIIYTGGDIDQHQVQNIAFPKNRSDPYLREWIKAANNPVLRPDEPGMNSIEFRDPTTGWIGPDGLWRMAVGGELNGYSAALLYKSEDFLNWTKVDHPLYSHNGSNMWECPDFFAVLPGNNGGLDLSAAIPQGAKHALKMSVDSVDKYLIGVYDLKRDAFVPDNVIDDRRLWLRIDYGTFYASKSFFDSNKGRRIIWGWSRETDSPSDDLEKGWAGLHTIPRRIWLADDGKQLLQWPVDEIEFLRTNEINHQGLELNKGDLFEIKEVDTFQADVEIDFELASIDDADPFDPSWLLDPEKHCGEVGASVPGGIGPFGLVILASDNMEEHTEVYFRVYKLQEKYMVLMCSDLRRSSMRPDLEKPAYGGFFEFDLAKERKISLRTLIDRSAVESFGGGGRVCITSRVYPAVLADVGRAHMYAFNNGSATVRVPQLSAWTMRKAQVNVEKGWSAIQNRGSI.

The signal sequence occupies residues 1 to 27; sequence MAQAWAFLLPVLFFGSYVTNLFLPTYA. The active site involves D73. N-linked (GlcNAc...) asparagine glycans are attached at residues N166, N234, and N246. A disulfide bond links C444 and C490. N565 carries N-linked (GlcNAc...) asparagine glycosylation.

Belongs to the glycosyl hydrolase 32 family.

The catalysed reaction is Hydrolysis of terminal, non-reducing (2-&gt;1)-linked beta-D-fructofuranose residues in fructans.. Inhibited by sucrose. Its function is as follows. Hydrolyzes inulin-type beta-(2,1)-fructans. May play a role as a beta-(2,1)-trimmer during graminan biosynthesis. This Leymus chinensis (Chinese lyme grass) protein is Fructan 1-exohydrolase.